The sequence spans 105 residues: DNA-directed RNA polymerase subunit omega (105 aa).

Belongs to the RNA polymerase subunit omega family. As to quaternary structure, the RNAP catalytic core consists of 2 alpha, 1 beta, 1 beta' and 1 omega subunit. When a sigma factor is associated with the core the holoenzyme is formed, which can initiate transcription.

The enzyme catalyses RNA(n) + a ribonucleoside 5'-triphosphate = RNA(n+1) + diphosphate. Functionally, promotes RNA polymerase assembly. Latches the N- and C-terminal regions of the beta' subunit thereby facilitating its interaction with the beta and alpha subunits. The protein is DNA-directed RNA polymerase subunit omega of Streptococcus equi subsp. zooepidemicus (strain MGCS10565).